A 362-amino-acid chain; its full sequence is 5'-tyrosyl-DNA phosphodiesterase (362 aa).

Residues M1–E10 are compositionally biased toward acidic residues. Positions M1 to M43 are disordered. Basic and acidic residues predominate over residues I11–Q20. Acidic residues predominate over residues E21–P33. The interaction with 5' end of substrate DNA stretch occupies residues N126–L130. Mg(2+)-binding residues include D128 and E158. Residues H232–R237 form an interaction with 5' end of substrate DNA region. The active-site Proton donor/acceptor is D271. The interval N273–R275 is interaction with 5' end of substrate DNA.

It belongs to the CCR4/nocturin family. TTRAP/TDP2 subfamily. Interacts with mxl-1; the interaction promotes axon regeneration after injury. Interacts with ets-4; the interaction is required for the sumoylation of ets-4. The cofactor is Mg(2+). Requires Mn(2+) as cofactor.

It localises to the nucleus. The protein localises to the PML body. Functionally, DNA repair enzyme that can remove a variety of covalent adducts from DNA through hydrolysis of a 5'-phosphodiester bond, giving rise to DNA with a free 5' phosphate. Catalyzes the hydrolysis of dead-end complexes between DNA and the topoisomerase 2 (top2) active site tyrosine residue. Hydrolyzes 5'-phosphoglycolates on protruding 5' ends on DNA double-strand breaks (DSBs) due to DNA damage by radiation and free radicals. Inhibits axon regeneration after neuronal injury by promoting the sumoylation of ets-4, thereby inhibiting the phosphorylation of ets-4 required for probable interaction with cebp-1 and activation of svh-2 expression. The chain is 5'-tyrosyl-DNA phosphodiesterase from Caenorhabditis elegans.